Consider the following 130-residue polypeptide: Small ribosomal subunit protein uS9 (130 aa).

Residues 109-130 (RKKERKKYGQRAARARFQYSKR) are disordered.

The protein belongs to the universal ribosomal protein uS9 family.

This is Small ribosomal subunit protein uS9 from Oleidesulfovibrio alaskensis (strain ATCC BAA-1058 / DSM 17464 / G20) (Desulfovibrio alaskensis).